The following is a 365-amino-acid chain: Tubulin-like protein CetZ (365 aa).

Residues 10–14 (QCGGK), 103–105 (GTG), Glu136, Asn163, and Asn181 each bind GTP.

Belongs to the CetZ family.

It is found in the cytoplasm. Functionally, involved in cell shape control. The sequence is that of Tubulin-like protein CetZ from Pyrococcus abyssi (strain GE5 / Orsay).